The following is a 302-amino-acid chain: GTP cyclohydrolase FolE2 (302 aa).

Residues methionine 1–proline 27 form a disordered region.

Belongs to the GTP cyclohydrolase IV family.

It carries out the reaction GTP + H2O = 7,8-dihydroneopterin 3'-triphosphate + formate + H(+). The protein operates within cofactor biosynthesis; 7,8-dihydroneopterin triphosphate biosynthesis; 7,8-dihydroneopterin triphosphate from GTP: step 1/1. Its function is as follows. Converts GTP to 7,8-dihydroneopterin triphosphate. The protein is GTP cyclohydrolase FolE2 of Oceanobacillus iheyensis (strain DSM 14371 / CIP 107618 / JCM 11309 / KCTC 3954 / HTE831).